Reading from the N-terminus, the 162-residue chain is MTKLTLYPGTFDPITNGHLDLIKRSAAMFEHIIVAVAASPSKNTLFTLDERVQLVQEVTQDLPNVSVEGFSGLMVDFARQKQANLLVRGLRTTMDFEYEFGLTSMYRKLMPELESVFLTPSEEYAFLSSTIVREVALHGGSVEAFVPSVVNQALIHKVKSPV.

T10 lines the substrate pocket. ATP-binding positions include 10–11 and H18; that span reads TF. Residues K42, M74, and R88 each coordinate substrate. ATP is bound by residues 89-91, E99, and 124-130; these read GLR and YAFLSST.

Belongs to the bacterial CoaD family. In terms of assembly, homohexamer. Requires Mg(2+) as cofactor.

Its subcellular location is the cytoplasm. It carries out the reaction (R)-4'-phosphopantetheine + ATP + H(+) = 3'-dephospho-CoA + diphosphate. Its pathway is cofactor biosynthesis; coenzyme A biosynthesis; CoA from (R)-pantothenate: step 4/5. Its function is as follows. Reversibly transfers an adenylyl group from ATP to 4'-phosphopantetheine, yielding dephospho-CoA (dPCoA) and pyrophosphate. This chain is Phosphopantetheine adenylyltransferase, found in Aliivibrio salmonicida (strain LFI1238) (Vibrio salmonicida (strain LFI1238)).